A 230-amino-acid chain; its full sequence is 5'-methylthioadenosine/S-adenosylhomocysteine nucleosidase (230 aa).

Glu12 serves as the catalytic Proton acceptor. Residues Gly78, Ile153, and 174-175 (ME) contribute to the substrate site. Asp198 functions as the Proton donor in the catalytic mechanism.

Belongs to the PNP/UDP phosphorylase family. MtnN subfamily.

The catalysed reaction is S-adenosyl-L-homocysteine + H2O = S-(5-deoxy-D-ribos-5-yl)-L-homocysteine + adenine. The enzyme catalyses S-methyl-5'-thioadenosine + H2O = 5-(methylsulfanyl)-D-ribose + adenine. It catalyses the reaction 5'-deoxyadenosine + H2O = 5-deoxy-D-ribose + adenine. Its pathway is amino-acid biosynthesis; L-methionine biosynthesis via salvage pathway; S-methyl-5-thio-alpha-D-ribose 1-phosphate from S-methyl-5'-thioadenosine (hydrolase route): step 1/2. Functionally, catalyzes the irreversible cleavage of the glycosidic bond in both 5'-methylthioadenosine (MTA) and S-adenosylhomocysteine (SAH/AdoHcy) to adenine and the corresponding thioribose, 5'-methylthioribose and S-ribosylhomocysteine, respectively. Also cleaves 5'-deoxyadenosine, a toxic by-product of radical S-adenosylmethionine (SAM) enzymes, into 5-deoxyribose and adenine. This is 5'-methylthioadenosine/S-adenosylhomocysteine nucleosidase from Shewanella halifaxensis (strain HAW-EB4).